The following is an 88-amino-acid chain: DNA-directed RNA polymerase subunit omega (88 aa).

This sequence belongs to the RNA polymerase subunit omega family. The RNAP catalytic core consists of 2 alpha, 1 beta, 1 beta' and 1 omega subunit. When a sigma factor is associated with the core the holoenzyme is formed, which can initiate transcription.

The enzyme catalyses RNA(n) + a ribonucleoside 5'-triphosphate = RNA(n+1) + diphosphate. Promotes RNA polymerase assembly. Latches the N- and C-terminal regions of the beta' subunit thereby facilitating its interaction with the beta and alpha subunits. The chain is DNA-directed RNA polymerase subunit omega from Salinispora tropica (strain ATCC BAA-916 / DSM 44818 / JCM 13857 / NBRC 105044 / CNB-440).